A 390-amino-acid chain; its full sequence is Chorismate synthase 2 (390 aa).

Residues arginine 39 and arginine 45 each coordinate NADP(+). FMN-binding positions include 132 to 134 (RSS), 253 to 254 (NA), glycine 298, 313 to 317 (KPIPT), and arginine 339.

This sequence belongs to the chorismate synthase family. In terms of assembly, homotetramer. Requires FMNH2 as cofactor.

It carries out the reaction 5-O-(1-carboxyvinyl)-3-phosphoshikimate = chorismate + phosphate. It functions in the pathway metabolic intermediate biosynthesis; chorismate biosynthesis; chorismate from D-erythrose 4-phosphate and phosphoenolpyruvate: step 7/7. Its function is as follows. Catalyzes the anti-1,4-elimination of the C-3 phosphate and the C-6 proR hydrogen from 5-enolpyruvylshikimate-3-phosphate (EPSP) to yield chorismate, which is the branch point compound that serves as the starting substrate for the three terminal pathways of aromatic amino acid biosynthesis. This reaction introduces a second double bond into the aromatic ring system. The chain is Chorismate synthase 2 from Bacillus thuringiensis (strain Al Hakam).